The chain runs to 54 residues: ATP synthase F(0) complex subunit 8 (54 aa).

Residues 13–35 (ALSLWVCFPLMMLSLSSFLPLTL) form a helical membrane-spanning segment.

This sequence belongs to the ATPase protein 8 family. Component of the ATP synthase complex composed at least of ATP5F1A/subunit alpha, ATP5F1B/subunit beta, ATP5MC1/subunit c (homooctomer), MT-ATP6/subunit a, MT-ATP8/subunit 8, ATP5ME/subunit e, ATP5MF/subunit f, ATP5MG/subunit g, ATP5MK/subunit k, ATP5MJ/subunit j, ATP5F1C/subunit gamma, ATP5F1D/subunit delta, ATP5F1E/subunit epsilon, ATP5PF/subunit F6, ATP5PB/subunit b, ATP5PD/subunit d, ATP5PO/subunit OSCP. ATP synthase complex consists of a soluble F(1) head domain (subunits alpha(3) and beta(3)) - the catalytic core - and a membrane F(0) domain - the membrane proton channel (subunits c, a, 8, e, f, g, k and j). These two domains are linked by a central stalk (subunits gamma, delta, and epsilon) rotating inside the F1 region and a stationary peripheral stalk (subunits F6, b, d, and OSCP).

It localises to the mitochondrion membrane. In terms of biological role, subunit 8, of the mitochondrial membrane ATP synthase complex (F(1)F(0) ATP synthase or Complex V) that produces ATP from ADP in the presence of a proton gradient across the membrane which is generated by electron transport complexes of the respiratory chain. ATP synthase complex consist of a soluble F(1) head domain - the catalytic core - and a membrane F(1) domain - the membrane proton channel. These two domains are linked by a central stalk rotating inside the F(1) region and a stationary peripheral stalk. During catalysis, ATP synthesis in the catalytic domain of F(1) is coupled via a rotary mechanism of the central stalk subunits to proton translocation. In vivo, can only synthesize ATP although its ATP hydrolase activity can be activated artificially in vitro. Part of the complex F(0) domain. This is ATP synthase F(0) complex subunit 8 from Myxine glutinosa (Atlantic hagfish).